The primary structure comprises 96 residues: UPF0235 protein YggU (96 aa).

Belongs to the UPF0235 family.

This Salmonella typhi protein is UPF0235 protein YggU.